Reading from the N-terminus, the 294-residue chain is Protease HtpX homolog (294 aa).

Helical transmembrane passes span 12–32 and 34–54; these read VLFG…ASSF and SPGV…YSYW. His138 contacts Zn(2+). Glu139 is an active-site residue. A Zn(2+)-binding site is contributed by His142. The next 2 helical transmembrane spans lie at 152-172 and 188-208; these read SVAG…VFFG and LALL…QLAI. Glu213 is a binding site for Zn(2+).

The protein belongs to the peptidase M48B family. Zn(2+) is required as a cofactor.

It localises to the cell membrane. The sequence is that of Protease HtpX homolog from Kineococcus radiotolerans (strain ATCC BAA-149 / DSM 14245 / SRS30216).